The primary structure comprises 312 residues: Calcium-independent mitochondrial carrier protein SCaMC-3L (312 aa).

3 Solcar repeats span residues 27 to 113 (GTLW…SRNF), 121 to 206 (PSFQ…LRCL), and 217 to 304 (PSGL…MKKT). The next 6 helical transmembrane spans lie at 33 to 50 (LLSGAMAGAVSRTGTAPL), 88 to 107 (GNGINVLKIAPEYAIKFSVF), 131 to 144 (SLAVAISQTLINPM), 182 to 200 (YLPNMLGIIPYACTDLAVY), 219 to 243 (GLVSLSSVTLSTTCGQMASYPLTLV), and 279 to 298 (GMTPTLLKVLPAGGISYLVY).

This sequence belongs to the mitochondrial carrier (TC 2.A.29) family. Mainly expressed in testis and at lesser levels in brain.

The protein resides in the mitochondrion inner membrane. The enzyme catalyses Mg(2+)(out) + phosphate(in) + ATP(out) = Mg(2+)(in) + phosphate(out) + ATP(in). The catalysed reaction is ADP(out) + phosphate(in) + H(+)(out) = ADP(in) + phosphate(out) + H(+)(in). Calcium-independent ATP-Mg/Pi exchanger that catalyzes the electroneutral exchange of Mg-ATP or free ADP against an hydrogenphosphate and participates in the net transport of adenine nucleotides across the mitochondria inner membrane. This is Calcium-independent mitochondrial carrier protein SCaMC-3L from Rattus norvegicus (Rat).